The sequence spans 101 residues: Ribonuclease kappa-B (101 aa).

Transmembrane regions (helical) follow at residues 13-33 (ACGI…GIFF) and 68-88 (VGIN…VSLC).

It belongs to the RNase K family.

The protein resides in the membrane. Endoribonuclease which preferentially cleaves ApU and ApG phosphodiester bonds. The sequence is that of Ribonuclease kappa-B (rnasekb) from Danio rerio (Zebrafish).